The chain runs to 332 residues: Ribosomal RNA small subunit methyltransferase C (332 aa).

This sequence belongs to the methyltransferase superfamily. RsmC family. Monomer.

It is found in the cytoplasm. The enzyme catalyses guanosine(1207) in 16S rRNA + S-adenosyl-L-methionine = N(2)-methylguanosine(1207) in 16S rRNA + S-adenosyl-L-homocysteine + H(+). Functionally, specifically methylates the guanine in position 1207 of 16S rRNA in the 30S particle. The chain is Ribosomal RNA small subunit methyltransferase C from Stutzerimonas stutzeri (strain A1501) (Pseudomonas stutzeri).